The sequence spans 125 residues: Testis-specific protein LINC02914 (125 aa).

Residues 1–12 show a composition bias toward basic and acidic residues; sequence MHRKEPGARLEA. A disordered region spans residues 1–45; sequence MHRKEPGARLEATRGAARPHKQGTKPMITRPSVSQLGEGKCPSSQ.

Expressed in testes and ejaculated spermatozoa (at protein level).

It localises to the cytoplasm. The protein resides in the nucleus. Its subcellular location is the cell projection. The protein localises to the cilium. It is found in the flagellum. In terms of biological role, may play a role in the flagellum biology. The chain is Testis-specific protein LINC02914 from Homo sapiens (Human).